The sequence spans 67 residues: Large ribosomal subunit protein bL31 (67 aa).

Positions 16, 18, 36, and 39 each coordinate Zn(2+).

It belongs to the bacterial ribosomal protein bL31 family. Type A subfamily. In terms of assembly, part of the 50S ribosomal subunit. Requires Zn(2+) as cofactor.

Functionally, binds the 23S rRNA. In Aliarcobacter butzleri (strain RM4018) (Arcobacter butzleri), this protein is Large ribosomal subunit protein bL31.